The primary structure comprises 407 residues: Peptidase T (407 aa).

Residue His81 participates in Zn(2+) binding. Asp83 is an active-site residue. Asp142 contacts Zn(2+). The active-site Proton acceptor is the Glu176. Glu177, Asp199, and His381 together coordinate Zn(2+).

The protein belongs to the peptidase M20B family. It depends on Zn(2+) as a cofactor.

The protein localises to the cytoplasm. It carries out the reaction Release of the N-terminal residue from a tripeptide.. Its function is as follows. Cleaves the N-terminal amino acid of tripeptides. The chain is Peptidase T from Streptococcus pneumoniae (strain P1031).